The primary structure comprises 51 residues: Insulin (51 aa).

Disulfide bonds link C7–C37, C19–C50, and C36–C41.

The protein belongs to the insulin family. As to quaternary structure, heterodimer of a B chain and an A chain linked by two disulfide bonds.

It localises to the secreted. Functionally, insulin decreases blood glucose concentration. It increases cell permeability to monosaccharides, amino acids and fatty acids. It accelerates glycolysis, the pentose phosphate cycle, and glycogen synthesis in liver. The polypeptide is Insulin (INS) (Anser anser anser (Western greylag goose)).